Here is a 1959-residue protein sequence, read N- to C-terminus: Zinc finger protein hangover (1959 aa).

In terms of domain architecture, ZAD spans 79-155 (NCCRLCIAPQ…FSSQAKQRQW (77 aa)). 4 residues coordinate Zn(2+): Cys81, Cys84, Cys128, and Cys131. Positions 178–208 (GFFDQHLHQQQQHHQHLENELEAEKEKATPT) are disordered. The span at 192–205 (QHLENELEAEKEKA) shows a compositional bias: basic and acidic residues. Position 228 is a phosphoserine (Ser228). A Phosphothreonine modification is found at Thr246. The C2H2-type 1 zinc-finger motif lies at 318–341 (ASCRACSLQFSTRANARRHERNLH). A C2H2-type 2; degenerate zinc finger spans residues 447-469 (MTCRCCNKYFSTYKNFMAHVRKK). The segment at 581–604 (YECKLCPKGFRTKHEFRTHVYDKH) adopts a C2H2-type 3 zinc-finger fold. The interval 674–762 (AVSDNASTTG…ANRDASAPKS (89 aa)) is disordered. Over residues 677–693 (DNASTTGSGMARSNSME) the composition is skewed to polar residues. The residue at position 680 (Ser680) is a Phosphoserine. Composition is skewed to low complexity over residues 716 to 727 (SSSAAPPLTSTP) and 741 to 759 (TSAS…DASA). C2H2-type zinc fingers lie at residues 770–793 (QVCP…ESKH) and 801–824 (YKCV…INVH). A phosphoserine mark is found at Ser832, Ser894, Ser895, Ser898, and Ser899. The C2H2-type 6 zinc finger occupies 908–930 (KECPICNAVFSNNIGLSNHMRSH). Positions 960 to 991 (TDSELGVGGTMSESAPATPANVPPAMANQTPQ) are disordered. 5 C2H2-type zinc fingers span residues 1011–1034 (MRCR…LTDH), 1042–1065 (IKCK…FKVH), 1078–1101 (FECD…RSVH), 1154–1176 (YQCK…INSH), and 1184–1207 (YSCK…YKKH). Positions 1233 to 1253 (TPTCNRKPITSTGAHQQQDGQ) are enriched in polar residues. A disordered region spans residues 1233–1301 (TPTCNRKPIT…GNGTTVGVAS (69 aa)). A compositionally biased stretch (basic residues) spans 1255-1267 (HSHHTAKRTIFRH). Acidic residues predominate over residues 1271-1283 (DDDDEEDDDEQQQ). 2 consecutive C2H2-type zinc fingers follow at residues 1318–1340 (VACT…IQKH) and 1375–1397 (YACD…RKWH). Residues 1445-1467 (QQSLNNSCNSSMNHNNNSSSNRS) are compositionally biased toward low complexity. Positions 1445-1471 (QQSLNNSCNSSMNHNNNSSSNRSKSMK) are disordered. 2 C2H2-type zinc fingers span residues 1476–1499 (LKCE…YELH) and 1552–1574 (WGCD…INNH). Residues 1627-1865 (AAGATTTDKL…STGERRKKAV (239 aa)) form a disordered region. The span at 1639 to 1695 (PDEEDSDDLDEDSSGDDDDSSGTGDDDDDDDSDDDEDGEGEDEDEEGDGGEGEDEEG) shows a compositional bias: acidic residues. The span at 1697 to 1715 (QPPAQLLPQQQHKTDLNLN) shows a compositional bias: low complexity. 2 stretches are compositionally biased toward acidic residues: residues 1716–1758 (QDDD…EEPE) and 1782–1829 (SDDE…EDEP). The segment covering 1833–1851 (STASFSESESSTTTTSNSH) has biased composition (low complexity). The C2H2-type 16 zinc-finger motif lies at 1873-1895 (FTCDLCQLCFDSQELLQSHIKSH). The segment at 1933-1959 (PDSKSAVLANNNNSKTSSKTVAAGATN) is disordered. The segment covering 1942-1952 (NNNNSKTSSKT) has biased composition (low complexity).

As to expression, expressed ubiquitously in the nervous system, in neurons not glia.

The protein localises to the nucleus. In terms of biological role, required for normal development of ethanol tolerance. Relies on two distinct molecular pathways: a cellular stress pathway defined by hang, and a parallel pathway requiring octopamine. In Drosophila melanogaster (Fruit fly), this protein is Zinc finger protein hangover (hang).